Here is a 363-residue protein sequence, read N- to C-terminus: Guanine nucleotide-binding protein alpha-11 subunit (363 aa).

A G-alpha domain is found at 26–363 (KMLKILLLGG…KISMEKVGFM (338 aa)). The interval 29-42 (KILLLGGPECGKST) is G1 motif. GTP is bound by residues 34 to 41 (GGPECGKS), 172 to 178 (LRARVPT), 197 to 201 (DVGGQ), 276 to 279 (NKID), and Ala335. Mg(2+) is bound by residues Ser41 and Thr178. Positions 170-178 (DVLRARVPT) are G2 motif. The interval 193 to 202 (LRMVDVGGQR) is G3 motif. A G4 motif region spans residues 272-279 (ILFLNKID). A G5 motif region spans residues 333 to 338 (TNATDT).

Belongs to the G-alpha family. As to quaternary structure, g proteins are composed of 3 units; alpha, beta and gamma. The alpha chain contains the guanine nucleotide binding site. In terms of tissue distribution, expressed in ADL and ASH neurons.

Its function is as follows. Guanine nucleotide-binding proteins (G proteins) are involved as modulators or transducers in various transmembrane signaling systems. Mediates the transduction of food and serotonin signals, which modulates the avoidance response to the odorant octanol. Has a role in lifespan to promote longevity. The protein is Guanine nucleotide-binding protein alpha-11 subunit (gpa-11) of Caenorhabditis elegans.